The primary structure comprises 355 residues: Chemerin-like receptor 2 (355 aa).

Residues 1-41 (MEDLEETLFEEFENYSYALDYYSLESDLEEKVQLGVVHWVS) lie on the Extracellular side of the membrane. N-linked (GlcNAc...) asparagine glycosylation is present at Asn-14. The chain crosses the membrane as a helical span at residues 42–62 (LVLYCLSFVLGIPGNAIVIWF). Residues 63 to 73 (TGFKWKKTVST) are Cytoplasmic-facing. The chain crosses the membrane as a helical span at residues 74–94 (LWFLNLAIADFIFLLFLPLYI). Residues 95–112 (SYVVMNFHWPFGIWLCKA) lie on the Extracellular side of the membrane. An intrachain disulfide couples Cys-110 to Cys-187. Residues 113–133 (NSFTAQLNMFASVFFLTVISL) form a helical membrane-spanning segment. At 134–154 (DHYIHLIHPVLSHRHRTLKNS) the chain is on the cytoplasmic side. A helical transmembrane segment spans residues 155–175 (LIVIIFIWLLASLIGGPALYF). The Extracellular segment spans residues 176–210 (RDTVEFNNHTLCYNNFQKHDPDLTVIRHHVLTWVK). The helical transmembrane segment at 211 to 231 (FIVGYLFPLLTMSICYLCLIF) threads the bilayer. Residues 232-247 (KVKKRSILISSRHFWT) are Cytoplasmic-facing. A helical transmembrane segment spans residues 248 to 268 (ILAVVVAFVVCWTPYHLFSIW). Residues 269 to 286 (ELTIHHNSYSHHVMQAGI) lie on the Extracellular side of the membrane. The helical transmembrane segment at 287 to 307 (PLSTGLAFLNSCLNPILYVLI) threads the bilayer. Topologically, residues 308–355 (SKKFQARFRSSVAEILKYTLWEVSCSGTVSEQLRNSETKNLCLLETAQ) are cytoplasmic.

It belongs to the chemokine-like receptor (CMKLR) family.

The protein resides in the cell membrane. In terms of biological role, receptor for chemoattractant adipokine chemerin/RARRES2 suggesting a role for this receptor in the regulation of inflammation and energy homesotasis. Signals mainly via beta-arrestin pathway. Binding of RARRES2 activates weakly G proteins, calcium mobilization and MAPK1/MAPK3 (ERK1/2) phosphorylation too. Acts also as a receptor for TAFA1, mediates its effects on neuronal stem-cell proliferation and differentiation via the activation of ROCK/ERK and ROCK/STAT3 signaling pathway. The protein is Chemerin-like receptor 2 (CMKLR2) of Macaca mulatta (Rhesus macaque).